A 141-amino-acid polypeptide reads, in one-letter code: Putative pre-16S rRNA nuclease (141 aa).

Belongs to the YqgF nuclease family.

The protein resides in the cytoplasm. Its function is as follows. Could be a nuclease involved in processing of the 5'-end of pre-16S rRNA. In Cupriavidus taiwanensis (strain DSM 17343 / BCRC 17206 / CCUG 44338 / CIP 107171 / LMG 19424 / R1) (Ralstonia taiwanensis (strain LMG 19424)), this protein is Putative pre-16S rRNA nuclease.